A 425-amino-acid polypeptide reads, in one-letter code: Protein CLP1 homolog (425 aa).

ATP-binding positions include Glu-18, Lys-59, and 121 to 126 (DVGKST).

It belongs to the Clp1 family. Clp1 subfamily.

Its subcellular location is the nucleus. In terms of biological role, required for endonucleolytic cleavage during polyadenylation-dependent pre-mRNA 3'-end formation. This Drosophila pseudoobscura pseudoobscura (Fruit fly) protein is Protein CLP1 homolog (cbc).